Reading from the N-terminus, the 389-residue chain is Arrestin-C (389 aa).

This sequence belongs to the arrestin family. As to expression, retina and pineal gland.

In terms of biological role, may play a role in an as yet undefined retina-specific signal transduction. Could bind to photoactivated-phosphorylated red/green opsins. The chain is Arrestin-C (arr3) from Aquarana catesbeiana (American bullfrog).